The chain runs to 303 residues: Elongation factor Ts (303 aa).

The interval 82 to 85 (TDFV) is involved in Mg(2+) ion dislocation from EF-Tu.

This sequence belongs to the EF-Ts family.

The protein localises to the cytoplasm. Functionally, associates with the EF-Tu.GDP complex and induces the exchange of GDP to GTP. It remains bound to the aminoacyl-tRNA.EF-Tu.GTP complex up to the GTP hydrolysis stage on the ribosome. The protein is Elongation factor Ts of Clostridioides difficile (strain 630) (Peptoclostridium difficile).